The sequence spans 497 residues: Guanosine-5'-triphosphate,3'-diphosphate pyrophosphatase (497 aa).

This sequence belongs to the GppA/Ppx family. GppA subfamily.

The catalysed reaction is guanosine 3'-diphosphate 5'-triphosphate + H2O = guanosine 3',5'-bis(diphosphate) + phosphate + H(+). Its pathway is purine metabolism; ppGpp biosynthesis; ppGpp from GTP: step 2/2. Functionally, catalyzes the conversion of pppGpp to ppGpp. Guanosine pentaphosphate (pppGpp) is a cytoplasmic signaling molecule which together with ppGpp controls the 'stringent response', an adaptive process that allows bacteria to respond to amino acid starvation, resulting in the coordinated regulation of numerous cellular activities. The polypeptide is Guanosine-5'-triphosphate,3'-diphosphate pyrophosphatase (Vibrio vulnificus (strain YJ016)).